Consider the following 430-residue polypeptide: MDETIKLLNKAESGLSGTIVVPGDKSISHRAVMFGAMANGTTNVSGFLPGDDCLSTIACFRQMGVAIEQEGDKVTVEGKGLDGLKEPNGVLDVGNSGTTIRLLLGVLSGRPFHSVVVGDDSIGKRPMARVTAPLRQMGAQIDGRETGNKTPLSIRGGQTKAIEYTMPVASAQVKSALLLAGLQAEGETSVTEPQTTRDHTERMLHAFGVKVTTAGKTISIQGGQSLQAADVVVPGDISSAAFFLVAGCIVPGSRVHLKNVGLNPTRAGILEVLKRSGAKLSIDEQVTTGGEPRGDMTISTSELSPFVIEGEEVPTLIDEIPVLAVLATQISGTTIIRDAEELKVKETNRIDTVVGELAKLGADIEATDDGMIIRGGKPLTGGKVDSHGDHRIGMALVIASLCANGPVELANIGAISVSYPQFFEHLQSLQ.

3-phosphoshikimate-binding residues include Lys-25, Ser-26, and Arg-30. Lys-25 lines the phosphoenolpyruvate pocket. Phosphoenolpyruvate contacts are provided by Gly-97 and Arg-125. 3-phosphoshikimate-binding residues include Ser-170, Gln-172, Asp-318, and Lys-345. Gln-172 contributes to the phosphoenolpyruvate binding site. The Proton acceptor role is filled by Asp-318. 2 residues coordinate phosphoenolpyruvate: Arg-349 and Arg-391.

The protein belongs to the EPSP synthase family. Monomer.

The protein resides in the cytoplasm. It catalyses the reaction 3-phosphoshikimate + phosphoenolpyruvate = 5-O-(1-carboxyvinyl)-3-phosphoshikimate + phosphate. It functions in the pathway metabolic intermediate biosynthesis; chorismate biosynthesis; chorismate from D-erythrose 4-phosphate and phosphoenolpyruvate: step 6/7. Functionally, catalyzes the transfer of the enolpyruvyl moiety of phosphoenolpyruvate (PEP) to the 5-hydroxyl of shikimate-3-phosphate (S3P) to produce enolpyruvyl shikimate-3-phosphate and inorganic phosphate. This is 3-phosphoshikimate 1-carboxyvinyltransferase from Shouchella clausii (strain KSM-K16) (Alkalihalobacillus clausii).